The primary structure comprises 145 residues: Small ribosomal subunit protein uS17c (145 aa).

Residues 1 to 36 (MLLTTPFVSSPVRVQGNGGSGASPWAGAATALRIQA) constitute a chloroplast transit peptide. The interval 101–145 (KTKHFLAVPLPPRDTRRKSQLLPPLQSQSQSQDQDQPPTPPPSSD) is disordered. Residues 120–136 (QLLPPLQSQSQSQDQDQ) are compositionally biased toward low complexity.

The protein belongs to the universal ribosomal protein uS17 family. As to quaternary structure, part of the 30S ribosomal subunit.

The protein resides in the plastid. Its subcellular location is the chloroplast. Functionally, one of the primary rRNA binding proteins, it binds specifically to the 5'-end of 16S ribosomal RNA. This Oryza sativa subsp. japonica (Rice) protein is Small ribosomal subunit protein uS17c (RPS17).